A 224-amino-acid polypeptide reads, in one-letter code: CRP-like cAMP-activated global transcriptional regulator (224 aa).

3',5'-cyclic AMP-binding positions include 64-70 (GRENLLT), 79-82 (GELS), 89-90 (RT), 134-135 (TN), 142-143 (IF), and 178-188 (EEIAQLVGASR). An HTH crp-type domain is found at 144-217 (TDVPGRVAKQ…GKSVLISDSE (74 aa)). The segment at residues 177-196 (QEEIAQLVGASRETVNKALA) is a DNA-binding region (H-T-H motif).

As to quaternary structure, homodimer.

Global transcriptional regulator that complexes with cAMP and binds to specific DNA promoter sites, causing DNA-bending, to regulate transcription. cAMP improves binding to specific DNA sequences, probably by altering protein conformation. Activates expression of whiB1. The chain is CRP-like cAMP-activated global transcriptional regulator from Mycobacterium tuberculosis (strain CDC 1551 / Oshkosh).